Here is a 428-residue protein sequence, read N- to C-terminus: Glutamine synthetase leaf isozyme, chloroplastic (428 aa).

The transit peptide at 1–49 (MAQILAPSIQCQTRITKTSPLATPISSKMWSSLVMKQNKKVARSAKFRV) directs the protein to the chloroplast. Residues 75-155 (IIAEYIWIGG…VICDAYTPQG (81 aa)) enclose the GS beta-grasp domain. The GS catalytic domain occupies 159 to 428 (PTNKRHKAAE…LAAQKIALKV (270 aa)).

This sequence belongs to the glutamine synthetase family. Homooctamer.

The protein resides in the plastid. It is found in the chloroplast. The catalysed reaction is L-glutamate + NH4(+) + ATP = L-glutamine + ADP + phosphate + H(+). Its function is as follows. The light-modulated chloroplast enzyme, encoded by a nuclear gene and expressed primarily in leaves, is responsible for the reassimilation of the ammonia generated by photorespiration. The polypeptide is Glutamine synthetase leaf isozyme, chloroplastic (GS2) (Medicago sativa (Alfalfa)).